We begin with the raw amino-acid sequence, 376 residues long: Putative glutamate--cysteine ligase 2 (376 aa).

The protein belongs to the glutamate--cysteine ligase type 2 family. YbdK subfamily.

It carries out the reaction L-cysteine + L-glutamate + ATP = gamma-L-glutamyl-L-cysteine + ADP + phosphate + H(+). Functionally, ATP-dependent carboxylate-amine ligase which exhibits weak glutamate--cysteine ligase activity. The polypeptide is Putative glutamate--cysteine ligase 2 (Mycobacterium bovis (strain ATCC BAA-935 / AF2122/97)).